The sequence spans 159 residues: Small ribosomal subunit protein uS7 (159 aa).

Belongs to the universal ribosomal protein uS7 family. In terms of assembly, part of the 30S ribosomal subunit. Contacts proteins S9 and S11.

Functionally, one of the primary rRNA binding proteins, it binds directly to 16S rRNA where it nucleates assembly of the head domain of the 30S subunit. Is located at the subunit interface close to the decoding center, probably blocks exit of the E-site tRNA. In Rickettsia felis (strain ATCC VR-1525 / URRWXCal2) (Rickettsia azadi), this protein is Small ribosomal subunit protein uS7.